The chain runs to 395 residues: uncharacterized protein (395 aa).

7 helical membrane-spanning segments follow: residues 42 to 62 (LKYV…LIFI), 67 to 87 (LYSF…FVLL), 97 to 117 (LIFN…LIIF), 128 to 148 (ILST…SIIP), 196 to 216 (FIYA…LYIL), 241 to 261 (ILFY…SFVA), and 281 to 301 (LFFS…GTVV).

It localises to the cell membrane. This is an uncharacterized protein from Mycoplasma genitalium (strain ATCC 33530 / DSM 19775 / NCTC 10195 / G37) (Mycoplasmoides genitalium).